The following is a 257-amino-acid chain: Neurotrophin-3 (257 aa).

The signal sequence occupies residues 1–18 (MSILFYVIFLAYLRGIQG). A propeptide spanning residues 19 to 138 (NNMDQRSLPE…VANRTSRRKR (120 aa)) is cleaved from the precursor. The interval 61 to 81 (STLPKAEAPREPERGGPAKSA) is disordered. Over residues 67-76 (EAPREPERGG) the composition is skewed to basic and acidic residues. Asn-131 carries an N-linked (GlcNAc...) asparagine glycan. 3 disulfide bridges follow: Cys-152/Cys-217, Cys-195/Cys-246, and Cys-205/Cys-248.

The protein belongs to the NGF-beta family. As to expression, brain and peripheral tissues.

It localises to the secreted. Its function is as follows. Seems to promote the survival of visceral and proprioceptive sensory neurons. This Homo sapiens (Human) protein is Neurotrophin-3 (NTF3).